Consider the following 178-residue polypeptide: Transcription factor E (178 aa).

Residues 5-89 (AEELILSLAK…YWKVNIDQIN (85 aa)) form the HTH TFE/IIEalpha-type domain.

Belongs to the TFE family. In terms of assembly, monomer. Interaction with RNA polymerase subunits RpoF and RpoE is necessary for Tfe stimulatory transcription activity. Able to interact with Tbp and RNA polymerase in the absence of DNA promoter. Interacts both with the preinitiation and elongation complexes.

Its function is as follows. Transcription factor that plays a role in the activation of archaeal genes transcribed by RNA polymerase. Facilitates transcription initiation by enhancing TATA-box recognition by TATA-box-binding protein (Tbp), and transcription factor B (Tfb) and RNA polymerase recruitment. Not absolutely required for transcription in vitro, but particularly important in cases where Tbp or Tfb function is not optimal. It dynamically alters the nucleic acid-binding properties of RNA polymerases by stabilizing the initiation complex and destabilizing elongation complexes. Seems to translocate with the RNA polymerase following initiation and acts by binding to the non template strand of the transcription bubble in elongation complexes. This is Transcription factor E from Sulfurisphaera tokodaii (strain DSM 16993 / JCM 10545 / NBRC 100140 / 7) (Sulfolobus tokodaii).